Consider the following 211-residue polypeptide: tRNA (guanine-N(7)-)-methyltransferase (211 aa).

The S-adenosyl-L-methionine site is built by E44, D69, D96, and D118. D118 is an active-site residue. Residue K122 coordinates substrate. The tract at residues 124–129 (RHEKRR) is interaction with RNA. Substrate is bound by residues D154 and 191–194 (TEYE).

The protein belongs to the class I-like SAM-binding methyltransferase superfamily. TrmB family.

It catalyses the reaction guanosine(46) in tRNA + S-adenosyl-L-methionine = N(7)-methylguanosine(46) in tRNA + S-adenosyl-L-homocysteine. Its pathway is tRNA modification; N(7)-methylguanine-tRNA biosynthesis. Its function is as follows. Catalyzes the formation of N(7)-methylguanine at position 46 (m7G46) in tRNA. The protein is tRNA (guanine-N(7)-)-methyltransferase of Streptococcus pneumoniae (strain JJA).